We begin with the raw amino-acid sequence, 167 residues long: NAD(P)H-quinone oxidoreductase subunit I, chloroplastic (167 aa).

2 consecutive 4Fe-4S ferredoxin-type domains span residues 55-84 and 95-124; these read GRIHFEFDKCIACEVCVRVCPIDLPVVDWK and LNYSIDFGICIFCGNCVEYCPTNCLSMTEE. Residues Cys-64, Cys-67, Cys-70, Cys-74, Cys-104, Cys-107, Cys-110, and Cys-114 each coordinate [4Fe-4S] cluster.

This sequence belongs to the complex I 23 kDa subunit family. In terms of assembly, NDH is composed of at least 16 different subunits, 5 of which are encoded in the nucleus. Requires [4Fe-4S] cluster as cofactor.

The protein resides in the plastid. The protein localises to the chloroplast thylakoid membrane. The enzyme catalyses a plastoquinone + NADH + (n+1) H(+)(in) = a plastoquinol + NAD(+) + n H(+)(out). The catalysed reaction is a plastoquinone + NADPH + (n+1) H(+)(in) = a plastoquinol + NADP(+) + n H(+)(out). NDH shuttles electrons from NAD(P)H:plastoquinone, via FMN and iron-sulfur (Fe-S) centers, to quinones in the photosynthetic chain and possibly in a chloroplast respiratory chain. The immediate electron acceptor for the enzyme in this species is believed to be plastoquinone. Couples the redox reaction to proton translocation, and thus conserves the redox energy in a proton gradient. This Jasminum nudiflorum (Winter jasmine) protein is NAD(P)H-quinone oxidoreductase subunit I, chloroplastic.